The following is a 248-amino-acid chain: Cobalt transport protein CbiM (248 aa).

The first 31 residues, 1-31 (MLKVIKKYRKFITFLMIGLVYTLAYPATAHA), serve as a signal peptide directing secretion. Transmembrane regions (helical) follow at residues 39–59 (LPPRWCIFWYAVSLPFFIYGL), 75–95 (VMLALCGAFVFVLSSLKLPSV), 107–127 (LGTVLFGPGVMSVLGVIVLLF), 139–159 (TLGANEFSMTIVGPIVGYAVW), 173–195 (LFLCAMFADWSTYVTTAFQLAIV), and 213–233 (IYAITQIPLAIAEGLLTVIVY).

The protein belongs to the CbiM family. In terms of assembly, forms an energy-coupling factor (ECF) transporter complex composed of an ATP-binding protein (A component, CbiO), a transmembrane protein (T component, CbiQ) and 2 possible substrate-capture proteins (S components, CbiM and CbiN) of unknown stoichimetry.

It localises to the cell membrane. It participates in cofactor biosynthesis; adenosylcobalamin biosynthesis. Functionally, part of the energy-coupling factor (ECF) transporter complex CbiMNOQ involved in cobalt import. The sequence is that of Cobalt transport protein CbiM from Limosilactobacillus reuteri (strain DSM 20016) (Lactobacillus reuteri).